The following is a 421-amino-acid chain: Gamma-glutamyl phosphate reductase (421 aa).

The protein belongs to the gamma-glutamyl phosphate reductase family.

The protein localises to the cytoplasm. It catalyses the reaction L-glutamate 5-semialdehyde + phosphate + NADP(+) = L-glutamyl 5-phosphate + NADPH + H(+). It functions in the pathway amino-acid biosynthesis; L-proline biosynthesis; L-glutamate 5-semialdehyde from L-glutamate: step 2/2. Catalyzes the NADPH-dependent reduction of L-glutamate 5-phosphate into L-glutamate 5-semialdehyde and phosphate. The product spontaneously undergoes cyclization to form 1-pyrroline-5-carboxylate. This is Gamma-glutamyl phosphate reductase from Pseudomonas syringae pv. tomato (strain ATCC BAA-871 / DC3000).